Reading from the N-terminus, the 122-residue chain is Large ribosomal subunit protein eL18 (122 aa).

It belongs to the eukaryotic ribosomal protein eL18 family.

This is Large ribosomal subunit protein eL18 from Thermoplasma volcanium (strain ATCC 51530 / DSM 4299 / JCM 9571 / NBRC 15438 / GSS1).